The chain runs to 518 residues: T-box transcription factor TBX5 (518 aa).

Residues 1–46 are disordered; the sequence is MADADEGFGLAHTPLEPDAKDLPCDSKPESALGAPSKSPSSPQAAF. Residues 15 to 28 show a composition bias toward basic and acidic residues; sequence LEPDAKDLPCDSKP. The span at 34-45 shows a compositional bias: low complexity; the sequence is APSKSPSSPQAA. The T-box DNA-binding region spans 58–238; that stretch reads LHERELWLKF…NNPFAKGFRG (181 aa). Positions 250-356 are disordered; the sequence is MQSKEYPVVP…PSEEDSFYRS (107 aa). Over residues 262-301 the composition is skewed to polar residues; that stretch reads TVRQKVASNHSPFSSESRALSTSSNLGSQYQCENGVSGPS. N6-acetyllysine is present on K339.

In terms of assembly, monomer. Homodimer (via the T-box); binds DNA as homodimer. Interacts (via the T-box) with NKX2-5 (via the homeobox); this complex binds DNA. Interacts with GATA4. Interacts with KAT2A and KAT2B. Acetylation at Lys-339 by KAT2A and KAT2B promotes nuclear retention.

Its subcellular location is the nucleus. It localises to the cytoplasm. In terms of biological role, DNA-binding protein that regulates the transcription of several genes and is involved in heart development and limb pattern formation. Binds to the core DNA motif of NPPA promoter. The protein is T-box transcription factor TBX5 (TBX5) of Homo sapiens (Human).